We begin with the raw amino-acid sequence, 407 residues long: Expansin-like protein 2 (407 aa).

An N-terminal signal peptide occupies residues Met1–Ser23. The region spanning His42 to Asn141 is the Expansin-like EG45 domain. 2 disulfides stabilise this stretch: Cys45/Cys75 and Cys78/Cys136. N-linked (GlcNAc...) asparagine glycans are attached at residues Asn70, Asn117, and Asn387.

It belongs to the expansin family. Expansin A subfamily.

Its subcellular location is the secreted. Its function is as follows. Unlikely to encode with a protein with expansin activity. In Dictyostelium discoideum (Social amoeba), this protein is Expansin-like protein 2 (expl2).